Consider the following 1650-residue polypeptide: MEAPGSGGGDGGGDPGGDGAHPDARGPVSGPCAAARDSERQLRLRLCVLNEILGTERDYVGTLRFLQSAFLQRIRQNVADSVEKGLTEENVKVLFSNIEDILEVHKDFLAALEYCLHPEPQSQHELGNVFLKFKDKFCVYEEYCSNHEKALRLLVELNKVPAVRAFLLSCMLLGGRKTTDIPLEGYLLSPIQRICKYPLLLKELAKRTPGKHPDHTAVQSALQAMKTVCSNINETKRQMEKLEALEQLQSHIEGWEGSNLTDICTELLLQGNLLKISAGNIQERAFFLFDNLLVYCKRKSRVTGSKKSTKRTKSINGSLYIFRGRINTEVMEVENVEDGTADYHSNGYTVTNGWKIHNTAKNKWFVCMAKTAEEKQKWLDALIREREQRESLKLGMERDAYVMIAEKGEKLYHMMMSKKVNLIKDRRRKLSTVPKCFLGNEFVAWLLEIGEISKTEEGVNLGQALLENGIIHHVSDKHQFKNEQVMYRFRYDDGTYKARSELEDIMSKGVRLYCRLHSLYAPVIKDRDYHLKTYKSVVPGSKLVDWLLAQGDCQTREEAVALGVGLCNNGFMHHVLEKSEFKDESQYFRFHADEEMEGTSSKNKQLRNDFKLVENILAKRLLIPPQEDDYGFDLEEKNKAVVVKSVQRGSLAEMAGLQAGRKIYSINEDLVFLRPFSEVETILNQFFCSRRPLRLLVATKAKETIKVPDHPEALSFQIRGTAPPCVFAVGRGSEAVAAGLCAGQCILKVNGTSVANDGALEVLEHFQAFRNHREEALGLYQWVYHSHEDAQLARASQGAPDEDPQEDDQPDSALPLLSLGPQLSLHEDSAVVSLTLDNVHLEHGVVYEYMSTAGAKCHVLEKIVEPRGCFRLAAKILEAFAVDDSIFVQNCGRLMAMSSAIVTMSHYEFHNICDTKLESIGQRIACYQEFAAQLKSRVSPPFKQASLEPHPLCGLDFCPTNCHVNLMEVSYPKTTPSVGRSFSIRFGRKPSLIGLDPEQGLNPMAYTQHCITTMAAPSWKCSPAVDEDSQGQGLNDSSYGSASGAPSQQDRGLSFLLKQEDREIQDAYLQLFTKLDVALKEMKQYVTQINRLLSTITEPTSAAPAPCDPSLVEETSSSPPVSEESEVDRTDHSGIKKVCFKVSEDEQEDSGHDTMSYRDSYSECNSNRDSVLSYTSVRSNSSYLGSDEMGSGDELPCDMRIPSDKQDKLHGCLEHLFNQVDSIHALLKGPVMSRAFEETRHFPMKHSWQEFKQKEECTVRGRNLIQISIQEDPWNLPSSIRTLVDNIQQYVEDGKNQLLLALLKCTDTELQLRRDAVFCQALVAAVCTFSEQLLAALDYRYNNNGEYEESSRDASRKWLEQVAATGVLLHWQSLLAPASVKEERTMLEDIWVTLSELDNVTFSFKQLDENSVANTNVFYHIEGSRQALKVVFYLDGFHFSRLPSRLEGGASLRLHTVLFTKALESVEGPPPPGNQAAEELQQEINAQSLEKVQQYYRKLRAFYLERSNLPTDAGATAVKIDQLIRPINALDELYRLMKTFVHPKAGAAGSLGAGLIPVSSELCYRLGACQITMCGTGMQRSTLSVSLEQAAILARSHGLLPKCVMQATDIMRKQGPRVEILAKNLRIKDPMPQGAPRLYQLCQPPVDGDL.

Positions 1-19 (MEAPGSGGGDGGGDPGGDG) are enriched in gly residues. Residues 1 to 33 (MEAPGSGGGDGGGDPGGDGAHPDARGPVSGPCA) form a disordered region. Positions 44–235 (LRLCVLNEIL…KTVCSNINET (192 aa)) constitute a DH domain. The region spanning 266–387 (ELLLQGNLLK…WLDALIRERE (122 aa)) is the PH domain. Ser-314 carries the post-translational modification Phosphoserine. 2 DEP domains span residues 416–491 (MSKK…RFRY) and 518–592 (SLYA…RFHA). The 79-residue stretch at 620-698 (RLLIPPQEDD…SRRPLRLLVA (79 aa)) folds into the PDZ domain. Residues 793-813 (ARASQGAPDEDPQEDDQPDSA) are disordered. The segment covering 800–810 (PDEDPQEDDQP) has biased composition (acidic residues). At Ser-991 the chain carries Phosphoserine. 2 disordered regions span residues 1022 to 1047 (SPAV…GAPS) and 1099 to 1129 (PTSA…EVDR). Polar residues predominate over residues 1030–1047 (QGQGLNDSSYGSASGAPS). A compositionally biased stretch (low complexity) spans 1109–1122 (PSLVEETSSSPPVS). 2 positions are modified to phosphoserine: Ser-1186 and Ser-1191.

Interacts preferentially with RAC2. Interacts with RAC1. Interacts with AUTS2.

The protein localises to the cytoplasm. It is found in the cytosol. The protein resides in the cell membrane. In terms of biological role, functions as a RAC guanine nucleotide exchange factor (GEF), which activates the Rac proteins by exchanging bound GDP for free GTP. Its activity is synergistically activated by phosphatidylinositol 3,4,5-trisphosphate and the beta gamma subunits of heterotrimeric G protein. May function downstream of heterotrimeric G proteins in neutrophils. The chain is Phosphatidylinositol 3,4,5-trisphosphate-dependent Rac exchanger 1 protein (Prex1) from Mus musculus (Mouse).